Here is a 438-residue protein sequence, read N- to C-terminus: Protein kinase PINOID (438 aa).

Residues 1–24 form a disordered region; the sequence is MLRESDGEMSLGTTNSPISSGTES. The segment covering 11–24 has biased composition (polar residues); that stretch reads LGTTNSPISSGTES. Residues 75-394 form the Protein kinase domain; it reads FRLMRRIGAG…AAEVKVHPFF (320 aa). Residues 81–89 and Lys-109 each bind ATP; that span reads IGAGDIGTV. Asp-205 serves as the catalytic Proton acceptor. The AGC-kinase C-terminal domain occupies 395 to 438; that stretch reads KGLNFALIRTLTPPEIPSSVVKKPMKSATFSGRSSNKPAAFDYF.

It belongs to the protein kinase superfamily. Ser/Thr protein kinase family. Interacts with PDK1, CML12 and PBP1. Component of a complex made of PINs (e.g. PIN1 and PIN2), MAB4/MELs (e.g. NPY1/MAB4 and NPY5/MEL1) and AGC kinases (e.g. D6PK and PID) at the plasma membrane. Binds directly to PIN2, NPY1/MAB4 and NPY5/MEL1. In terms of processing, autophosphorylated. Phosphorylated by PDK1. As to expression, expressed in root hair cells, shoot xylem parenchyma cells and endodermis around the vasculature. Expressed in anther primordia, vasculature of the growing flower stalk, young pedicels and bracts and developing sepals, but not in petals. In pistils, transiently expressed in the vasculature of the style and the septum, and in the integuments and funiculus of the developing ovule.

The protein localises to the cytoplasm. It is found in the cytosol. The protein resides in the cell membrane. The enzyme catalyses L-seryl-[protein] + ATP = O-phospho-L-seryl-[protein] + ADP + H(+). The catalysed reaction is L-threonyl-[protein] + ATP = O-phospho-L-threonyl-[protein] + ADP + H(+). With respect to regulation, activated by magnesium and PDK1. Inhibited by staurosporine. Repressed by calcium. Serine/threonine-protein kinase involved in the regulation of auxin signaling. Acts as a positive regulator of cellular auxin efflux and regulates organ development by enhancing polar auxin transport. Phosphorylates conserved serine residues in the PIN auxin efflux carriers. Phosphorylation of PIN proteins is required and sufficient for apical-basal PIN polarity that enables directional intercellular auxin fluxes, which mediate differential growth, tissue patterning and organogenesis. Phosphorylates PIN proteins (e.g. PIN1 and PIN2), especially when NPY proteins (e.g. NPY1/MAB4 and NPY5/MEL1) are recruited at the plasma membrane; this enhances the polarized localizations (apical or basal) of PINs in the cell by limiting their lateral diffusion-based escape. Acts in association with PIN1 to control the establishment of bilateral symmetry and promotion of cotyledon outgrowth. Regulates root gravitropism through modulation of PIN2-dependent basipetal auxin transport. Required for polarization of PIN3-dependent auxin transport for hypocotyl gravitropic response. The protein kinase activity of PID is essential for its auxin efflux regulatory function. PID kinase and PP2A phosphatase activities antagonistically regulate phosphorylation of PIN proteins, affecting PIN sorting. The polypeptide is Protein kinase PINOID (Arabidopsis thaliana (Mouse-ear cress)).